We begin with the raw amino-acid sequence, 500 residues long: Bifunctional protein GlmU (500 aa).

The interval methionine 1–arginine 242 is pyrophosphorylase. Residues leucine 10 to glycine 13, lysine 24, glutamine 81, and glycine 86 to threonine 87 each bind UDP-N-acetyl-alpha-D-glucosamine. Aspartate 112 serves as a coordination point for Mg(2+). Glycine 151, glutamate 167, asparagine 182, and asparagine 240 together coordinate UDP-N-acetyl-alpha-D-glucosamine. Asparagine 240 contributes to the Mg(2+) binding site. The linker stretch occupies residues valine 243–alanine 263. The segment at glycine 264–glutamine 500 is N-acetyltransferase. UDP-N-acetyl-alpha-D-glucosamine-binding residues include arginine 345 and lysine 363. Histidine 375 serves as the catalytic Proton acceptor. UDP-N-acetyl-alpha-D-glucosamine contacts are provided by tyrosine 378 and asparagine 389. Residues alanine 392, asparagine 398 to tyrosine 399, serine 417, and alanine 435 each bind acetyl-CoA. A disordered region spans residues alanine 472 to glutamine 500. Basic and acidic residues predominate over residues histidine 482–glutamine 500.

In the N-terminal section; belongs to the N-acetylglucosamine-1-phosphate uridyltransferase family. It in the C-terminal section; belongs to the transferase hexapeptide repeat family. As to quaternary structure, homotrimer. The cofactor is Mg(2+).

It localises to the cytoplasm. It catalyses the reaction alpha-D-glucosamine 1-phosphate + acetyl-CoA = N-acetyl-alpha-D-glucosamine 1-phosphate + CoA + H(+). The enzyme catalyses N-acetyl-alpha-D-glucosamine 1-phosphate + UTP + H(+) = UDP-N-acetyl-alpha-D-glucosamine + diphosphate. It functions in the pathway nucleotide-sugar biosynthesis; UDP-N-acetyl-alpha-D-glucosamine biosynthesis; N-acetyl-alpha-D-glucosamine 1-phosphate from alpha-D-glucosamine 6-phosphate (route II): step 2/2. The protein operates within nucleotide-sugar biosynthesis; UDP-N-acetyl-alpha-D-glucosamine biosynthesis; UDP-N-acetyl-alpha-D-glucosamine from N-acetyl-alpha-D-glucosamine 1-phosphate: step 1/1. Its pathway is bacterial outer membrane biogenesis; LPS lipid A biosynthesis. Functionally, catalyzes the last two sequential reactions in the de novo biosynthetic pathway for UDP-N-acetylglucosamine (UDP-GlcNAc). The C-terminal domain catalyzes the transfer of acetyl group from acetyl coenzyme A to glucosamine-1-phosphate (GlcN-1-P) to produce N-acetylglucosamine-1-phosphate (GlcNAc-1-P), which is converted into UDP-GlcNAc by the transfer of uridine 5-monophosphate (from uridine 5-triphosphate), a reaction catalyzed by the N-terminal domain. This is Bifunctional protein GlmU from Rhodococcus jostii (strain RHA1).